The sequence spans 175 residues: ATP-dependent protease subunit HslV (175 aa).

Residue Thr2 is part of the active site. Gly158, Cys161, and Thr164 together coordinate Na(+).

This sequence belongs to the peptidase T1B family. HslV subfamily. A double ring-shaped homohexamer of HslV is capped on each side by a ring-shaped HslU homohexamer. The assembly of the HslU/HslV complex is dependent on binding of ATP.

The protein resides in the cytoplasm. The enzyme catalyses ATP-dependent cleavage of peptide bonds with broad specificity.. Its activity is regulated as follows. Allosterically activated by HslU binding. Functionally, protease subunit of a proteasome-like degradation complex believed to be a general protein degrading machinery. In Haemophilus influenzae (strain ATCC 51907 / DSM 11121 / KW20 / Rd), this protein is ATP-dependent protease subunit HslV.